A 631-amino-acid polypeptide reads, in one-letter code: Guanylate-binding protein 4 (631 aa).

Residues 33–283 (SQPVVVVAIV…FASYIFTYAK (251 aa)) enclose the GB1/RHD3-type G domain. GTP is bound by residues 43-50 (GWSHTGKS) and 103-107 (DTEGL). Residues 492–592 (IAEKHTKKEA…GHNIKEMKQN (101 aa)) adopt a coiled-coil conformation.

Belongs to the TRAFAC class dynamin-like GTPase superfamily. GB1/RHD3 GTPase family. GB1 subfamily. Heterodimer with other family members, including GBP1, GBP2 and GBP5. Dimerization regulates subcellular location. Interacts with IRF7; preventing interaction between TRAF6 and IRF7, resulting in impaired TRAF6-mediated IRF7 ubiquitination. Mainly expressed in organs of the immune system, such as spleen and lymph nodes.

The protein resides in the golgi apparatus membrane. The protein localises to the cytoplasm. It localises to the nucleus. It is found in the perinuclear region. The catalysed reaction is GTP + H2O = GDP + phosphate + H(+). In terms of biological role, interferon (IFN)-inducible GTPase that plays important roles in innate immunity against a diverse range of bacterial, viral and protozoan pathogens. Negatively regulates the antiviral response by inhibiting activation of IRF7 transcription factor. The chain is Guanylate-binding protein 4 from Mus musculus (Mouse).